A 505-amino-acid chain; its full sequence is MDFGRSRDIISGLPDSLLCHILSFLNTKEAASTSVLAKKWRYLFASVPNLDFDDSVHLRLGKRNPAVSGEDYLKMINERSDQLSTSFMDFVDQVLRLQDNSPLHKFSLKIRDCVDIVRIICWILKVLERGVSDLELDMHLKWKSSLPSKIFLSETLVRLKLSVERGPFIDVEDVHLPKLKTLHIVSVKFEKHGIGLNKLLSGCHILEELNLEYISWCLWDFVSVSLTTLKRLTFCGEVMQDENPISVSFNTPNLVYLMFTDAIADEYSTVNFDSLVEAHINLQMSEDQVEQTRFSDSEGNMEGCMVANATELIMGICNVKILYLSVYTLEVLTYCCEAIPLFNNLTHLTIESNSEVGWESVSGLLKNSPNLETLVFKGLVHRFTDKCGDMCLCKPWEEDEEEEEDEETPTCLSSCPVKVLKILEFGKIYDDEIEKRIDQVKHFLEKIPDIEQLILHYNTPVDEDVIKVYQQLRRHPKVASSKCKLQLISDNLSLSSKDCALFGID.

The region spanning 7 to 55 (RDIISGLPDSLLCHILSFLNTKEAASTSVLAKKWRYLFASVPNLDFDDS) is the F-box domain.

The polypeptide is Putative F-box protein At1g58310 (Arabidopsis thaliana (Mouse-ear cress)).